Here is a 186-residue protein sequence, read N- to C-terminus: Peptidyl-tRNA hydrolase (186 aa).

H19 acts as the Proton acceptor in catalysis. F64, N66, and N112 together coordinate tRNA.

This sequence belongs to the PTH family. As to quaternary structure, monomer.

The protein localises to the cytoplasm. The enzyme catalyses an N-acyl-L-alpha-aminoacyl-tRNA + H2O = an N-acyl-L-amino acid + a tRNA + H(+). Its function is as follows. Hydrolyzes ribosome-free peptidyl-tRNAs (with 1 or more amino acids incorporated), which drop off the ribosome during protein synthesis, or as a result of ribosome stalling. Functionally, catalyzes the release of premature peptidyl moieties from peptidyl-tRNA molecules trapped in stalled 50S ribosomal subunits, and thus maintains levels of free tRNAs and 50S ribosomes. In Pelagibacter ubique (strain HTCC1062), this protein is Peptidyl-tRNA hydrolase.